Here is a 364-residue protein sequence, read N- to C-terminus: Histidinol-phosphate aminotransferase (364 aa).

Position 226 is an N6-(pyridoxal phosphate)lysine (K226).

The protein belongs to the class-II pyridoxal-phosphate-dependent aminotransferase family. Histidinol-phosphate aminotransferase subfamily. As to quaternary structure, homodimer. It depends on pyridoxal 5'-phosphate as a cofactor.

It catalyses the reaction L-histidinol phosphate + 2-oxoglutarate = 3-(imidazol-4-yl)-2-oxopropyl phosphate + L-glutamate. The protein operates within amino-acid biosynthesis; L-histidine biosynthesis; L-histidine from 5-phospho-alpha-D-ribose 1-diphosphate: step 7/9. The sequence is that of Histidinol-phosphate aminotransferase from Sulfurimonas denitrificans (strain ATCC 33889 / DSM 1251) (Thiomicrospira denitrificans (strain ATCC 33889 / DSM 1251)).